We begin with the raw amino-acid sequence, 506 residues long: Cobyric acid synthase (506 aa).

One can recognise a GATase cobBQ-type domain in the interval 251–448; it reads DITIAIVQLP…LHGLFDSDAF (198 aa). Cys332 (nucleophile) is an active-site residue. His440 is a catalytic residue.

This sequence belongs to the CobB/CobQ family. CobQ subfamily.

The protein operates within cofactor biosynthesis; adenosylcobalamin biosynthesis. Functionally, catalyzes amidations at positions B, D, E, and G on adenosylcobyrinic A,C-diamide. NH(2) groups are provided by glutamine, and one molecule of ATP is hydrogenolyzed for each amidation. This Salmonella agona (strain SL483) protein is Cobyric acid synthase.